The sequence spans 450 residues: Probable glucan endo-1,3-beta-glucosidase eglC (450 aa).

A signal peptide spans 1 to 18 (MQFTHLVALALALATSEA). The Proton donor role is filled by E128. N183 is a glycosylation site (N-linked (GlcNAc...) asparagine). The Nucleophile role is filled by E239. Residues N362 and N368 are each glycosylated (N-linked (GlcNAc...) asparagine). Composition is skewed to low complexity over residues 377–395 (SSAI…SGSS) and 405–420 (ASGQ…SAPS). A disordered region spans residues 377-420 (SSAISGSSSGSAAGSSGSSGSSGSGASGASGQSSSSTGSSSAPS). A lipid anchor (GPI-anchor amidated asparagine) is attached at N427. A propeptide spans 428-450 (AASGLSGSICGAVVAVCLALAAL) (removed in mature form).

This sequence belongs to the glycosyl hydrolase 17 family. Post-translationally, the GPI-anchor is attached to the protein in the endoplasmic reticulum and serves to target the protein to the cell surface. There, the glucosamine-inositol phospholipid moiety is cleaved off and the GPI-modified mannoprotein is covalently attached via its lipidless GPI glycan remnant to the 1,6-beta-glucan of the outer cell wall layer.

It is found in the cell membrane. Its subcellular location is the secreted. It localises to the cell wall. The catalysed reaction is Hydrolysis of (1-&gt;3)-beta-D-glucosidic linkages in (1-&gt;3)-beta-D-glucans.. In terms of biological role, glucanases play a role in cell expansion during growth, in cell-cell fusion during mating, and in spore release during sporulation. This enzyme may be involved in beta-glucan degradation and also function biosynthetically as a transglycosylase. The protein is Probable glucan endo-1,3-beta-glucosidase eglC (eglC) of Aspergillus fumigatus (strain CBS 144.89 / FGSC A1163 / CEA10) (Neosartorya fumigata).